We begin with the raw amino-acid sequence, 123 residues long: MPTIKQLIRNARQPIRNVTKSPALGGCPQRRGTCTRVYTITPKKPNSALRKVARVRLTSGFEITAYIPGIGHNSQEHSVVLVRGGRVKDLPGVRYHIVRGTLDAVGVKDRQQGRSKYGVKKPK.

The protein belongs to the universal ribosomal protein uS12 family. In terms of assembly, part of the 30S ribosomal subunit.

It localises to the plastid. The protein resides in the chloroplast. With S4 and S5 plays an important role in translational accuracy. Located at the interface of the 30S and 50S subunits. The protein is Small ribosomal subunit protein uS12cz/uS12cy (rps12-A) of Gossypium hirsutum (Upland cotton).